The sequence spans 265 residues: MGRSRSRSSSRSKHVKSGKHNKKRSRSREKERVRKRSKSRESKRNRRRESRSRSRSNTASRRERERPASPPDRIDIFGRTVSKRSSLDEKQKREEEEKKAEYERQRRIRQQEIEEKLIEEETARRVEELVAKRVEEELEKRKDEIEREVLRRVEEAKRIMEKQLLEELERQRQAELSAQKAREEEERGKREELERILEENNRKIADAQAKLAEEQLKIVEEQRKIHEERMKLDQERQRQQKEEQKIILGKGKSRPKLSFSFKNPD.

The segment covering 1–54 has biased composition (basic residues); sequence MGRSRSRSSSRSKHVKSGKHNKKRSRSREKERVRKRSKSRESKRNRRRESRSRS. The necessary and sufficient for RNA binding stretch occupies residues 1–66; sequence MGRSRSRSSS…NTASRRERER (66 aa). A disordered region spans residues 1 to 105; it reads MGRSRSRSSS…EEKKAEYERQ (105 aa). Composition is skewed to basic and acidic residues over residues 60–76 and 85–105; these read SRRERERPASPPDRIDI and SSLDEKQKREEEEKKAEYERQ. The interval 67–265 is necessary and sufficient for transcriptional regulation; sequence PASPPDRIDI…KLSFSFKNPD (199 aa). Residues 164–168 carry the LXXLL motif 1; degenerate motif; that stretch reads LLEEL. A disordered region spans residues 172–192; that stretch reads RQAELSAQKAREEEERGKREE. Residues 180 to 192 are compositionally biased toward basic and acidic residues; sequence KAREEEERGKREE. The LXXLL motif 2; degenerate signature appears at 193–197; sequence LERIL. Residues 229–245 show a composition bias toward basic and acidic residues; the sequence is RMKLDQERQRQQKEEQK. The interval 229 to 265 is disordered; it reads RMKLDQERQRQQKEEQKIILGKGKSRPKLSFSFKNPD.

Belongs to the ARGLU1 family.

Its subcellular location is the nucleus. The protein resides in the nucleus speckle. The protein localises to the chromosome. Its function is as follows. Dual function regulator of gene expression; regulator of transcription and modulator of alternative splicing. General coactivator of nuclear receptor-induced gene expression. This is Arginine and glutamate-rich protein 1 (arglu1) from Xenopus laevis (African clawed frog).